Here is a 318-residue protein sequence, read N- to C-terminus: Pantothenate kinase (318 aa).

96 to 103 provides a ligand contact to ATP; sequence GSVAVGKS.

This sequence belongs to the prokaryotic pantothenate kinase family.

The protein resides in the cytoplasm. It carries out the reaction (R)-pantothenate + ATP = (R)-4'-phosphopantothenate + ADP + H(+). It functions in the pathway cofactor biosynthesis; coenzyme A biosynthesis; CoA from (R)-pantothenate: step 1/5. This chain is Pantothenate kinase, found in Coxiella burnetii (strain RSA 493 / Nine Mile phase I).